The following is a 267-amino-acid chain: MDEGGGAGAAAAAAGNAAGAAVHHNARSAEDVFRDFRARRAGIVKALTTDVEKFYRQCDPEKENLCLYGLPNETWDVTLPAEEVPPELPEPALGINFARDGMIEKDWLSLVAVHSDAWLLSVAFYFGARFGFDKEARRRLFTMINGLPTVYEVVTGIAKKQTKVSNGSSKSNKSNPKPSKQSNSNSKPAKPPQPKDEEDSGPEGTEDEDQAYMCGACGETYANGEFWICCDVCEKWFHGKCVRITPAKAEHIKQYKCPGCSSKRSRE.

The interval 162–207 (TKVSNGSSKSNKSNPKPSKQSNSNSKPAKPPQPKDEEDSGPEGTED) is disordered. Positions 165–188 (SNGSSKSNKSNPKPSKQSNSNSKP) are enriched in low complexity. The segment covering 196 to 207 (DEEDSGPEGTED) has biased composition (acidic residues). The PHD-type zinc-finger motif lies at 211–263 (AYMCGACGETYANGEFWICCDVCEKWFHGKCVRITPAKAEHIKQYKCPGCSSK).

Belongs to the Alfin family. In terms of assembly, interacts with H3K4me3 and to a lesser extent with H3K4me2.

It is found in the nucleus. In terms of biological role, histone-binding component that specifically recognizes H3 tails trimethylated on 'Lys-4' (H3K4me3), which mark transcription start sites of virtually all active genes. This Oryza sativa subsp. japonica (Rice) protein is PHD finger protein ALFIN-LIKE 7.